The following is a 771-amino-acid chain: MFVIKRNGYKENVMFDKITSRIRKLCYGLNTDHIDPIKIAMKVIQGIYNGVTTVELDTLAAEIAATCTTQHPDYAILAARIAVSNLHKETKKLFSEVMEDLFNYVNPKNGKHSPIISSITMDIVNKYKDKLNSVIIYERDFSYNYFGFKTLEKSYLLKINNKIVERPQHMLMRVAVGIHQWDIDSAIETYNLLSEKWFTHASPTLFNAGTSRHQMSSCFLLNMIDDSIEGIYDTLKRCALISKMAGGIGLSISNIRASGSYISGTNGISNGIIPMLRVYNNTARYIDQGGNKRPGVMAIYLEPWHSDIMAFLDLKKNTGNEEHRTRDLFIALWIPDLFMKRVKDDGEWSLMCPDECPGLDNVWGDEFERLYTLYERERRYKSIIKARVVWKAIIESQIETGTPFILYKDACNKKSNQQNLGTIKCSNLCTEIIQYADANEVAVCNLASVALNMFVIDGRFDFLKLKDVVKVIVRNLNKIIDINYYPIPEAEISNKRHRPIGIGVQGLADAFILLNYPFDSLEAQDLNKKIFETIYYGALEASCELAEKEGPYDTYVGSYASNGILQYDLWNVVPSDLWNWEPLKDKIRTYGLRNSLLVAPMPTASTAQILGNNESVEPYTSNIYTRRVLSGEFQVVNPHLLRVLTERKLWNDEIKNRIMADGGSIQNTNLPEDIKRVYKTIWEIPQKTIIKMAADRGAFIDQSQSMNIHIADPSYSKLTSMHFYGWSLGLKTGMYYLRTKPASAPIQFTLDKDKIKPLVVCDSEICTSCSG.

The region spanning 1 to 92 is the ATP-cone domain; the sequence is MFVIKRNGYK…VSNLHKETKK (92 aa). Residues 5–6, 11–17, threonine 53, aspartate 57, and lysine 88 contribute to the ATP site; these read KR and ENVMFDK. Residues serine 202 and serine 217 each contribute to the GDP site. DTTP is bound by residues 226–228, lysine 243, and arginine 256; that span reads DSI. Asparagine 427 contacts GDP. Asparagine 427 serves as the catalytic Proton acceptor. The Cysteine radical intermediate role is filled by cysteine 429. GDP contacts are provided by residues glutamate 431 and 603–606; that span reads TAST. The active-site Proton acceptor is glutamate 431.

Belongs to the ribonucleoside diphosphate reductase large chain family. In terms of assembly, interacts with RNR2/OPG047 subunit. It depends on Mg(2+) as a cofactor.

It carries out the reaction a 2'-deoxyribonucleoside 5'-diphosphate + [thioredoxin]-disulfide + H2O = a ribonucleoside 5'-diphosphate + [thioredoxin]-dithiol. Its function is as follows. Ribonucleoside-diphosphate reductase holoenzyme provides the precursors necessary for viral DNA synthesis. Allows virus growth in non-dividing cells. Catalyzes the biosynthesis of deoxyribonucleotides from the corresponding ribonucleotides. The polypeptide is Ribonucleoside-diphosphate reductase large subunit (OPG080) (Homo sapiens (Human)).